Reading from the N-terminus, the 365-residue chain is uncharacterized protein (365 aa).

The next 6 membrane-spanning stretches (helical) occupy residues 3-23 (MDTSKVILIVAIIIWIILYSI), 60-80 (IGIISIPICVILGFFMLLNII), 100-120 (VFLFGDVIPWIPGIIALLIAI), 141-161 (SGILLLLGLPLGAFVELGDEF), 171-191 (AIASAGPLANLIIFLTSIPLL), and 280-300 (TALFINTIYWTYWFNFLLALF).

It to S.solfataricus C04034.

Its subcellular location is the cell membrane. This is an uncharacterized protein from Methanocaldococcus jannaschii (strain ATCC 43067 / DSM 2661 / JAL-1 / JCM 10045 / NBRC 100440) (Methanococcus jannaschii).